Consider the following 329-residue polypeptide: NADH-quinone oxidoreductase subunit H (329 aa).

The next 9 helical transmembrane spans lie at 9–29 (LIKILILVAVFSALGGFATYI), 42–62 (GPCYVGPFGLLQVAADGIKLF), 75–95 (FIFTLAPIIAMVSAFVSMAPI), 117–137 (IGFLFFLAVGAAGIYAPILAG), 154–174 (IQLLSFEVVSTLTILAPLMVV), 188–208 (GGFLDWLVFKQPLAFVLFLIA), 238–258 (LKWGMFFLAEYAHLFAFSFVI), 269–291 (WGFIPGGIAILIKAGFFVFLSMW), and 309–329 (WKIMLPLALLNIVLTGIIILI).

This sequence belongs to the complex I subunit 1 family. As to quaternary structure, NDH-1 is composed of 14 different subunits. Subunits NuoA, H, J, K, L, M, N constitute the membrane sector of the complex.

It is found in the cell inner membrane. It catalyses the reaction a quinone + NADH + 5 H(+)(in) = a quinol + NAD(+) + 4 H(+)(out). In terms of biological role, NDH-1 shuttles electrons from NADH, via FMN and iron-sulfur (Fe-S) centers, to quinones in the respiratory chain. The immediate electron acceptor for the enzyme in this species is believed to be ubiquinone. Couples the redox reaction to proton translocation (for every two electrons transferred, four hydrogen ions are translocated across the cytoplasmic membrane), and thus conserves the redox energy in a proton gradient. This subunit may bind ubiquinone. The sequence is that of NADH-quinone oxidoreductase subunit H from Helicobacter pylori (strain Shi470).